The chain runs to 1081 residues: Protein QUIRKY (1081 aa).

The C2 1 domain maps to 1–124; the sequence is MNTTPFHSDP…SRRGEEGLVY (124 aa). 2 disordered regions span residues 154 to 198 and 238 to 323; these read DTAG…MNIP and PQHV…MEKK. Over residues 163–176 the composition is skewed to low complexity; the sequence is QQQQQQQQFHPPQQ. Residues 248 to 257 show a composition bias toward basic and acidic residues; sequence NHPHRNDNHP. A compositionally biased stretch (pro residues) spans 258–268; it reads QRPPSPPPPPS. C2 domains lie at 318 to 440, 477 to 605, and 652 to 778; these read TTME…PQWY, SSDA…SKWH, and VCSD…TNSY. Glu-351, Ser-352, Asp-408, and Ser-413 together coordinate Ca(2+). 3 helical membrane-spanning segments follow: residues 879-899, 916-936, and 1024-1044; these read WYRI…LDNI, LVLV…VVMI, and LFIA…AKMV.

The protein belongs to the MCTP family. Interacts with SUB/SCM and POQ at the plasma membrane. Binds to SUB/SCM at plasmodesmata (PD) in root epidermal cells to promote tissue morphogenesis. Ca(2+) serves as cofactor. In terms of tissue distribution, observed mainly in flowers, and, to a lower extent, in seedlings, roots, shoots, leaves, stems and inflorescences. Expressed in the vascular tissues of roots, cotyledons and rosette leaves. Accumulates in roots meristems.

The protein resides in the cell membrane. The protein localises to the cytoplasm. Its subcellular location is the golgi apparatus membrane. It localises to the cell junction. It is found in the plasmodesma. Its function is as follows. May be involved in Ca 2(+)-dependent signaling and membrane trafficking. Plays a role in fruit dehiscence. Components of the machinery involved in organ development mediated by the receptor-like kinase STRUBBELIG (SUB). Collaboratively with SUB and POQ, regulates cell growth anisotropy during gynoecium development, thus linking together cell-cell communication and cellular growth. Together with SUB/SCM, links RLK-dependent signal transduction and intercellular communication mediated by plasmodesmata (PD) to regulate tissue morphogenesis. May function as a signaling molecule by regulating the trafficking of other regulators. The polypeptide is Protein QUIRKY (Arabidopsis thaliana (Mouse-ear cress)).